The primary structure comprises 223 residues: MKFFIDTADLEEISAANDLGVLDGVTTNPSLVAKIVSDPEKFTYQDFKDHIAKVCEIVDGPVSAEVTTLSPEEMISQGEELAAIHDNVVVKCPLTRDGLKAMRHLSGNGIRINATLVFSPSQAILAAKAGASYVSPFVGRLDDISTEGMALVDQIVRIYDNYRFPTEVLVASIRHPQHVVEAALMGADIATIPFDVIGQLLKHPLTDSGLKRFMDDASVIQQG.

Lys91 acts as the Schiff-base intermediate with substrate in catalysis.

This sequence belongs to the transaldolase family. Type 3B subfamily.

It is found in the cytoplasm. The catalysed reaction is D-sedoheptulose 7-phosphate + D-glyceraldehyde 3-phosphate = D-erythrose 4-phosphate + beta-D-fructose 6-phosphate. It participates in carbohydrate degradation; pentose phosphate pathway; D-glyceraldehyde 3-phosphate and beta-D-fructose 6-phosphate from D-ribose 5-phosphate and D-xylulose 5-phosphate (non-oxidative stage): step 2/3. In terms of biological role, transaldolase is important for the balance of metabolites in the pentose-phosphate pathway. In Chlorobium phaeobacteroides (strain BS1), this protein is Probable transaldolase.